Reading from the N-terminus, the 361-residue chain is Peptide chain release factor 1 (361 aa).

Gln233 bears the N5-methylglutamine mark. Basic and acidic residues predominate over residues 280–293; the sequence is ERRKKEQERADSRR. The segment at 280-307 is disordered; it reads ERRKKEQERADSRRGQVGSGDRSERIRT.

It belongs to the prokaryotic/mitochondrial release factor family. Post-translationally, methylated by PrmC. Methylation increases the termination efficiency of RF1.

The protein resides in the cytoplasm. Functionally, peptide chain release factor 1 directs the termination of translation in response to the peptide chain termination codons UAG and UAA. The protein is Peptide chain release factor 1 of Rickettsia massiliae (strain Mtu5).